The primary structure comprises 258 residues: Hydroxyacylglutathione hydrolase (258 aa).

Residues His52, His54, Asp56, His57, His109, Asp126, and His164 each contribute to the Zn(2+) site.

Belongs to the metallo-beta-lactamase superfamily. Glyoxalase II family. As to quaternary structure, monomer. Zn(2+) serves as cofactor.

The catalysed reaction is an S-(2-hydroxyacyl)glutathione + H2O = a 2-hydroxy carboxylate + glutathione + H(+). The protein operates within secondary metabolite metabolism; methylglyoxal degradation; (R)-lactate from methylglyoxal: step 2/2. Its function is as follows. Thiolesterase that catalyzes the hydrolysis of S-D-lactoyl-glutathione to form glutathione and D-lactic acid. The chain is Hydroxyacylglutathione hydrolase from Xylella fastidiosa (strain M23).